The sequence spans 1500 residues: Myosin-8 (1500 aa).

In terms of domain architecture, Myosin N-terminal SH3-like spans A8–V57. A Myosin motor domain is found at S62–T732. ATP-binding positions include G156–T163 and N210–K218. Actin-binding stretches follow at residues L496–Y530, N532–V555, F590–L613, and L613–N635. 6 consecutive IQ domains span residues L735–Q764, L758–A787, R783–L812, L806–A835, Q831–T860, and L854–E883. A coiled-coil region spans residues T884–T1049. Residues D1146–E1447 form the Dilute domain.

Belongs to the TRAFAC class myosin-kinesin ATPase superfamily. Myosin family. Plant myosin class XI subfamily. As to quaternary structure, homodimer.

It is found in the cytoplasm. Myosin heavy chain that is required for the cell cycle-regulated transport of various organelles and proteins for their segregation. Functions by binding with its tail domain to receptor proteins on organelles and exerting force with its N-terminal motor domain against actin filaments, thereby transporting its cargo along polarized actin cables. The protein is Myosin-8 (XI-B) of Arabidopsis thaliana (Mouse-ear cress).